The following is a 785-amino-acid chain: Endonuclease MutS2 (785 aa).

335 to 342 (GPNTGGKT) contacts ATP. The Smr domain maps to 710–785 (LDLRGERYEN…GSGVTIVELK (76 aa)).

This sequence belongs to the DNA mismatch repair MutS family. MutS2 subfamily. In terms of assembly, homodimer. Binds to stalled ribosomes, contacting rRNA.

Endonuclease that is involved in the suppression of homologous recombination and thus may have a key role in the control of bacterial genetic diversity. Its function is as follows. Acts as a ribosome collision sensor, splitting the ribosome into its 2 subunits. Detects stalled/collided 70S ribosomes which it binds and splits by an ATP-hydrolysis driven conformational change. Acts upstream of the ribosome quality control system (RQC), a ribosome-associated complex that mediates the extraction of incompletely synthesized nascent chains from stalled ribosomes and their subsequent degradation. Probably generates substrates for RQC. The protein is Endonuclease MutS2 of Bacillus velezensis (strain DSM 23117 / BGSC 10A6 / LMG 26770 / FZB42) (Bacillus amyloliquefaciens subsp. plantarum).